A 246-amino-acid chain; its full sequence is Proteasome subunit alpha type-6 (246 aa).

It belongs to the peptidase T1A family. The 26S proteasome consists of a 20S proteasome core and two 19S regulatory subunits. The 20S proteasome core is composed of 28 subunits that are arranged in four stacked rings, resulting in a barrel-shaped structure. The two end rings are each formed by seven alpha subunits, and the two central rings are each formed by seven beta subunits. The catalytic chamber with the active sites is on the inside of the barrel.

It localises to the cytoplasm. The protein resides in the nucleus. The proteasome is a multicatalytic proteinase complex which is characterized by its ability to cleave peptides with Arg, Phe, Tyr, Leu, and Glu adjacent to the leaving group at neutral or slightly basic pH. The proteasome has an ATP-dependent proteolytic activity. The chain is Proteasome subunit alpha type-6 (pas-1) from Caenorhabditis elegans.